Reading from the N-terminus, the 398-residue chain is MVAGIHSLLLLLFYQVLLSGCTGLIPEEGKRKYTESGRSSPQQSQRVLNQFELRLLSMFGLKRRPTPGKNVVIPPYMLDLYHLHLAQLAADEGTSAMDFQMERAASRANTVRSFHHEESMEEIPESREKTIQRFFFNLSSIPNEELVTSAELRIFREQVQEPFESDSSKLHRINIYDIVKPAAAASRGPVVRLLDTRLVHHNESKWESFDVTPAIARWIAHKQPNHGFVVEVNHLDNDKNVPKKHVRISRSLTPDKDNWPQIRPLLVTFSHDGKGHALHKRQKRQARHKQRKRLKSSCRRHPLYVDFSDVGWNDWIVAPPGYHAFYCHGECPFPLADHLNSTNHAIVQTLVNSVNTNIPKACCVPTELSAISMLYLDENEKVVLKNYQDMVVEGCGCR.

The N-terminal stretch at 1–23 is a signal peptide; sequence MVAGIHSLLLLLFYQVLLSGCTG. The propeptide occupies 24–284; the sequence is LIPEEGKRKY…GHALHKRQKR (261 aa). Residues asparagine 137, asparagine 202, and asparagine 340 are each glycosylated (N-linked (GlcNAc...) asparagine). 3 disulfide bridges follow: cysteine 298–cysteine 363, cysteine 327–cysteine 395, and cysteine 331–cysteine 397.

Belongs to the TGF-beta family. As to quaternary structure, homodimer; disulfide-linked.

It is found in the secreted. Induces cartilage and bone formation. In Xenopus laevis (African clawed frog), this protein is Bone morphogenetic protein 2-A (bmp2-a).